Here is a 213-residue protein sequence, read N- to C-terminus: Protein DMP4 (213 aa).

4 consecutive transmembrane segments (helical) span residues 51 to 71 (LANL…PIFS), 78 to 98 (LVSK…CFIL), 142 to 162 (FIDF…VLFD), and 180 to 200 (VLTA…ATFP).

The protein belongs to the plant DMP1 protein family. In terms of tissue distribution, expressed in leaves, flowers and siliques, especially in vascular tissues.

It is found in the vacuole membrane. In terms of biological role, involved in membrane remodeling. This is Protein DMP4 from Arabidopsis thaliana (Mouse-ear cress).